A 63-amino-acid chain; its full sequence is Large ribosomal subunit protein bL32 (63 aa).

It belongs to the bacterial ribosomal protein bL32 family.

This Lacticaseibacillus paracasei (strain ATCC 334 / BCRC 17002 / CCUG 31169 / CIP 107868 / KCTC 3260 / NRRL B-441) (Lactobacillus paracasei) protein is Large ribosomal subunit protein bL32.